A 242-amino-acid chain; its full sequence is Methylthioribulose-1-phosphate dehydratase (242 aa).

The tract at residues 1–22 (MAAASGHGLELANGGDATQDKL) is disordered. Cys-97 is a binding site for substrate. The Zn(2+) site is built by His-115 and His-117. The Proton donor/acceptor role is filled by Glu-139. His-195 is a Zn(2+) binding site.

It belongs to the aldolase class II family. MtnB subfamily. The cofactor is Zn(2+).

It is found in the cytoplasm. It carries out the reaction 5-(methylsulfanyl)-D-ribulose 1-phosphate = 5-methylsulfanyl-2,3-dioxopentyl phosphate + H2O. It functions in the pathway amino-acid biosynthesis; L-methionine biosynthesis via salvage pathway; L-methionine from S-methyl-5-thio-alpha-D-ribose 1-phosphate: step 2/6. In terms of biological role, catalyzes the dehydration of methylthioribulose-1-phosphate (MTRu-1-P) into 2,3-diketo-5-methylthiopentyl-1-phosphate (DK-MTP-1-P). Functions in the methionine salvage pathway. May play a role in apoptosis. In Gallus gallus (Chicken), this protein is Methylthioribulose-1-phosphate dehydratase.